A 332-amino-acid polypeptide reads, in one-letter code: Phospho-N-acetylmuramoyl-pentapeptide-transferase (332 aa).

Helical transmembrane passes span 3–23 (FALM…PRFI), 52–72 (MGGT…ATAF), 74–94 (LLTG…VVGF), 115–135 (LALQ…GAGG), 140–160 (VFGH…FWLV), 172–192 (IDGL…VIAF), 197–217 (FDIL…FVYN), 223–243 (IFMG…ISIA), 248–268 (WTLL…MLQV), and 311–331 (VDFF…AILY).

Belongs to the glycosyltransferase 4 family. MraY subfamily. It depends on Mg(2+) as a cofactor.

It is found in the cell membrane. The catalysed reaction is UDP-N-acetyl-alpha-D-muramoyl-L-alanyl-gamma-D-glutamyl-L-lysyl-D-alanyl-D-alanine + di-trans,octa-cis-undecaprenyl phosphate = Mur2Ac(oyl-L-Ala-gamma-D-Glu-L-Lys-D-Ala-D-Ala)-di-trans,octa-cis-undecaprenyl diphosphate + UMP. The protein operates within cell wall biogenesis; peptidoglycan biosynthesis. In terms of biological role, catalyzes the initial step of the lipid cycle reactions in the biosynthesis of the cell wall peptidoglycan: transfers peptidoglycan precursor phospho-MurNAc-pentapeptide from UDP-MurNAc-pentapeptide onto the lipid carrier undecaprenyl phosphate, yielding undecaprenyl-pyrophosphoryl-MurNAc-pentapeptide, known as lipid I. This Streptococcus suis (strain 98HAH33) protein is Phospho-N-acetylmuramoyl-pentapeptide-transferase.